Reading from the N-terminus, the 199-residue chain is NAD(P)H dehydrogenase (quinone) (199 aa).

Residues 4–190 (VLVLYYSTYG…EGARHQGELI (187 aa)) form the Flavodoxin-like domain. FMN-binding positions include 10–15 (STYGHV) and 78–80 (TRF). Tyr12 is an NAD(+) binding site. Trp98 serves as a coordination point for substrate. FMN is bound by residues 113–119 (STATQHG) and His134.

This sequence belongs to the WrbA family. It depends on FMN as a cofactor.

The enzyme catalyses a quinone + NADH + H(+) = a quinol + NAD(+). It catalyses the reaction a quinone + NADPH + H(+) = a quinol + NADP(+). The sequence is that of NAD(P)H dehydrogenase (quinone) from Cupriavidus metallidurans (strain ATCC 43123 / DSM 2839 / NBRC 102507 / CH34) (Ralstonia metallidurans).